We begin with the raw amino-acid sequence, 314 residues long: Hydroxyethylthiazole kinase (314 aa).

A substrate-binding site is contributed by Met-70. 2 residues coordinate ATP: Arg-145 and Ser-217. Gly-244 serves as a coordination point for substrate.

This sequence belongs to the Thz kinase family. Mg(2+) serves as cofactor.

It carries out the reaction 5-(2-hydroxyethyl)-4-methylthiazole + ATP = 4-methyl-5-(2-phosphooxyethyl)-thiazole + ADP + H(+). It participates in cofactor biosynthesis; thiamine diphosphate biosynthesis; 4-methyl-5-(2-phosphoethyl)-thiazole from 5-(2-hydroxyethyl)-4-methylthiazole: step 1/1. Catalyzes the phosphorylation of the hydroxyl group of 4-methyl-5-beta-hydroxyethylthiazole (THZ). The polypeptide is Hydroxyethylthiazole kinase (Bifidobacterium longum (strain NCC 2705)).